Here is a 364-residue protein sequence, read N- to C-terminus: Chorismate synthase (364 aa).

Positions 48 and 54 each coordinate NADP(+). FMN is bound by residues 129–131 (RSS), 243–244 (NA), G288, 303–307 (KPTSS), and R329.

Belongs to the chorismate synthase family. As to quaternary structure, homotetramer. FMNH2 serves as cofactor.

It catalyses the reaction 5-O-(1-carboxyvinyl)-3-phosphoshikimate = chorismate + phosphate. Its pathway is metabolic intermediate biosynthesis; chorismate biosynthesis; chorismate from D-erythrose 4-phosphate and phosphoenolpyruvate: step 7/7. Functionally, catalyzes the anti-1,4-elimination of the C-3 phosphate and the C-6 proR hydrogen from 5-enolpyruvylshikimate-3-phosphate (EPSP) to yield chorismate, which is the branch point compound that serves as the starting substrate for the three terminal pathways of aromatic amino acid biosynthesis. This reaction introduces a second double bond into the aromatic ring system. In Chelativorans sp. (strain BNC1), this protein is Chorismate synthase.